We begin with the raw amino-acid sequence, 836 residues long: Homeobox-leucine zipper protein ATHB-15 (836 aa).

The segment at residues 14-77 is a DNA-binding region (homeobox); sequence DNGKYVRYTP…NRRCREKQRK (64 aa). Residues 72-115 adopt a coiled-coil conformation; sequence REKQRKEASRLQAVNRKLTAMNKLLMEENDRLQKQVSQLVHENS. An START domain is found at 151 to 379; it reads RDASPAGLLS…IAQEVTQTNS (229 aa).

The protein belongs to the HD-ZIP homeobox family. Class III subfamily. As to quaternary structure, interacts with ESR1 and ESR2. Interacts with ZPR3. As to expression, highly expressed the developing vascular elements and the adaxial portion of cotyledons. Expressed in developing ovules, stamens and carpels. Expressed in procambium and shoot meristem.

Its subcellular location is the nucleus. Its function is as follows. Probable transcription factor involved in the regulation of meristem development to promote lateral organ formation. May regulates procambial and vascular tissue formation or maintenance, and vascular development in inflorescence stems. The polypeptide is Homeobox-leucine zipper protein ATHB-15 (ATHB-15) (Arabidopsis thaliana (Mouse-ear cress)).